Consider the following 676-residue polypeptide: UvrABC system protein B (676 aa).

A Helicase ATP-binding domain is found at 35–192 (QGVADGLMYQ…ARLVAMQYTR (158 aa)). Residue 48 to 55 (GVTGSGKT) coordinates ATP. A Beta-hairpin motif is present at residues 101–124 (YYDYYQPEAYVPTRDLFIEKDSSV). Residues 439–605 (QVDDLLGEIR…GVNKAVRELI (167 aa)) enclose the Helicase C-terminal domain. The 36-residue stretch at 634–669 (AREIKRLEKLMMDHARNLEFEQAAAARDALTALKNR) folds into the UVR domain.

This sequence belongs to the UvrB family. In terms of assembly, forms a heterotetramer with UvrA during the search for lesions. Interacts with UvrC in an incision complex.

It is found in the cytoplasm. Its function is as follows. The UvrABC repair system catalyzes the recognition and processing of DNA lesions. A damage recognition complex composed of 2 UvrA and 2 UvrB subunits scans DNA for abnormalities. Upon binding of the UvrA(2)B(2) complex to a putative damaged site, the DNA wraps around one UvrB monomer. DNA wrap is dependent on ATP binding by UvrB and probably causes local melting of the DNA helix, facilitating insertion of UvrB beta-hairpin between the DNA strands. Then UvrB probes one DNA strand for the presence of a lesion. If a lesion is found the UvrA subunits dissociate and the UvrB-DNA preincision complex is formed. This complex is subsequently bound by UvrC and the second UvrB is released. If no lesion is found, the DNA wraps around the other UvrB subunit that will check the other stand for damage. The chain is UvrABC system protein B from Bordetella avium (strain 197N).